The following is a 1673-amino-acid chain: NBPF family member NBPF26 (1673 aa).

4 EGF-like domains span residues 24–63 (HALQCRDGYEPCVNKGMCVTYHSGTGYCKCPEGFLGEYCQ), 64–102 (HRDPCEKNRCQNGGTCVAQAMLGKATCRCASGFTGEDCQ), 105–143 (TPHPCFVSRPCLNGGTCHMLSRDTYECTCQVGFTGKECQ), and 144–180 (WTDACLSHLCANGSTCTTVANQFSCKCLTGFTGQKCE). 17 disulfides stabilise this stretch: C28–C41, C35–C51, C53–C62, C68–C79, C73–C90, C92–C101, C109–C121, C115–C131, C133–C142, C148–C159, C153–C168, C170–C179, C186–C198, C192–C207, C209–C218, C225–C236, and C230–C246. Positions 182–219 (DVNECDIPGHCQHGGTCLNLPGSYQCQCLQGFTGQYCD) constitute an EGF-like 5; calcium-binding domain. Positions 221–258 (LYVPCAHSPCVNGGTCRQTGDFTFECNCLPVPDSTSSA) constitute an EGF-like 6 domain. The stretch at 337–381 (RQFKEEKLAEQLKQAEELRQYKVLVHSQERELTQLKEKLREGRDA) forms a coiled coil. 3 disordered regions span residues 423-463 (KLSP…KVPE), 713-734 (EKVQKSSAPREMQKAEEKEVPE), and 782-828 (WEDA…EGYS). Positions 427–443 (ENDEDEDEDVQVEEDEK) are enriched in acidic residues. Olduvai domains follow at residues 427–521 (ENDE…NILP), 698–790 (ENDN…HIIP), 791–879 (ENES…ATGP), 882–937 (SREL…VDMD), 938–1029 (EIEK…PSCP), 1032–1104 (SGEL…PSCP), 1107–1162 (SREL…LDVD), 1163–1255 (RIKK…RSKK), 1256–1348 (ERRR…PSCP), 1351–1423 (SREL…PSCP), 1426–1481 (SREL…LDVD), 1482–1574 (RIKK…RSKK), and 1575–1673 (ERRR…IFPQ). Over residues 452–463 (EVQKTEESKVPE) the composition is skewed to basic and acidic residues. Acidic residues-rich tracts occupy residues 792–801 (NESDDEEEEE) and 812–824 (ESEEEEVPQESWD). The segment at 1242–1280 (KGKGKKRRGRRSKKERRRGRKEGEEDQNPPCPRLSRELL) is disordered. The segment covering 1243 to 1261 (GKGKKRRGRRSKKERRRGR) has biased composition (basic residues). Positions 1561–1594 (KGKGKKRRGRRSKKERRRGRKEGEEDQNPPCPRL) are disordered. Over residues 1562–1580 (GKGKKRRGRRSKKERRRGR) the composition is skewed to basic residues.

This sequence belongs to the NBPF family.

The protein localises to the cytoplasm. This Homo sapiens (Human) protein is NBPF family member NBPF26.